A 211-amino-acid chain; its full sequence is Probable GTP-binding protein EngB (211 aa).

The EngB-type G domain maps to 21-197 (TAPEFAFLGR…WGEIHRVAAE (177 aa)). GTP is bound by residues 29–36 (GRSNVGKS), 55–59 (GRTRA), 80–83 (DLPG), 147–150 (TKAD), and 176–178 (CSA). Mg(2+) contacts are provided by serine 36 and threonine 57.

This sequence belongs to the TRAFAC class TrmE-Era-EngA-EngB-Septin-like GTPase superfamily. EngB GTPase family. Requires Mg(2+) as cofactor.

Necessary for normal cell division and for the maintenance of normal septation. The polypeptide is Probable GTP-binding protein EngB (Acidobacterium capsulatum (strain ATCC 51196 / DSM 11244 / BCRC 80197 / JCM 7670 / NBRC 15755 / NCIMB 13165 / 161)).